A 760-amino-acid chain; its full sequence is MKLNVDGLLVYFPYDYIYPEQFSYMLELKRTLDAKGHGVLEMPSGTGKTVSLLALIVAYQRAYPLEVTKLIYCSRTVPEIEKVIEELRKLLSFYEQQEGEKLPFLGLALSSRKNLCIHPEVTPLRFGKDVDGKCHSLTASYVRAQYQQDASLPHCRFYEEFDIHGRQMPLPAGIYNLDDLKALGQRQGWCPYFLARYSILHANVVVYSYHYLLDPKIADLVSKELARKAVVVFDEAHNIDNVCIDSMSVNLTRRTLDRCQSNLDTLQKTVLRIKETDEQRLRDEYRRLVEGLREASVARETDAHLANPVLPDEVLQEAVPGSIRTAEHFLGFLRRLLEYVKWRLRVQHVVQESPPAFLSGLAQRVCIQRKPLRFCAERLRSLLHTLEIADLADFSPLTLLANFATLVSTYAKGFTIIIEPFDDRTPTIANPVLHFSCMDASLAIKPVFERFQSVIITSGTLSPLDIYPKILDFHPVTMATFTMTLARVCLCPMIIGRGNDQVAISSKFETREDIAVIRNYGNLLLEMSAVVPDGIVAFFTSYQYMESTVASWYEQGILENIQRNKLLFIETQDGAETSVALEKYQEACENGRGAILLSVARGKVSEGIDFVHHYGRAVIMFGVPYVYTQSRILKARLEYLRDQFQIRENDFLTFDAMRHAAQCVGRAIRGKTDYGLMVFADKRFARADKRGKLPRWIQEHLTDSNLNLTVDEGVQVAKYFLRQMAQPFHREDQLGLSLLSLEQLQSEETLQRIEQIAQQL.

In terms of domain architecture, Helicase ATP-binding spans 7-283 (GLLVYFPYDY…KETDEQRLRD (277 aa)). 42-49 (MPSGTGKT) contributes to the ATP binding site. Positions 116, 134, 155, and 190 each coordinate [4Fe-4S] cluster. Positions 234–237 (DEAH) match the DEAH box motif. The tract at residues 438–637 (MDASLAIKPV…TQSRILKARL (200 aa)) is mediates interaction with MMS19.

Belongs to the helicase family. RAD3/XPD subfamily. As to quaternary structure, component of the 7-subunit TFIIH core complex composed of XPB/ERCC3, XPD/ERCC2, GTF2H1, GTF2H2, GTF2H3, GTF2H4 and GTF2H5, which is active in NER. The core complex associates with the 3-subunit CDK-activating kinase (CAK) module composed of CCNH/cyclin H, CDK7 and MNAT1 to form the 10-subunit holoenzyme (holo-TFIIH) active in transcription. The interaction with GTF2H2 results in the stimulation of the 5'--&gt;3' helicase activity. Component of the MMXD complex, which includes CIAO1, ERCC2, CIAO2B, MMS19 and SLC25A5. Interacts with CIAO1 and CIAO2B; the interaction WITH CIAO2B is direct. Interacts with ATF7IP. Interacts directly with MMS19. Part of TBP-based Pol II pre-initiation complex (PIC), in which Pol II core assembles with general transcription factors and other specific initiation factors including GTF2E1, GTF2E2, GTF2F1, GTF2F2, TCEA1, ERCC2, ERCC3, GTF2H2, GTF2H3, GTF2H4, GTF2H5, GTF2A1, GTF2A2, GTF2B and TBP; this large multi-subunit PIC complex mediates DNA unwinding and targets Pol II core to the transcription start site where the first phosphodiester bond forms. Mg(2+) is required as a cofactor. It depends on [4Fe-4S] cluster as a cofactor. ISGylated.

It is found in the nucleus. It localises to the cytoplasm. The protein resides in the cytoskeleton. The protein localises to the spindle. The enzyme catalyses Couples ATP hydrolysis with the unwinding of duplex DNA at the replication fork by translocating in the 5'-3' direction. This creates two antiparallel DNA single strands (ssDNA). The leading ssDNA polymer is the template for DNA polymerase III holoenzyme which synthesizes a continuous strand.. It catalyses the reaction ATP + H2O = ADP + phosphate + H(+). Its function is as follows. ATP-dependent 5'-3' DNA helicase, component of the general transcription and DNA repair factor IIH (TFIIH) core complex, which is involved in general and transcription-coupled nucleotide excision repair (NER) of damaged DNA and, when complexed to CDK-activating kinase (CAK), involved in transcription by RNA polymerase II. In NER, TFIIH acts by opening DNA around the lesion to allow the excision of the damaged oligonucleotide and its replacement by a new DNA fragment. The ATP-dependent helicase activity of XPD/ERCC2 is required for DNA opening. In transcription, TFIIH has an essential role in transcription initiation. When the pre-initiation complex (PIC) has been established, TFIIH is required for promoter opening and promoter escape. Phosphorylation of the C-terminal tail (CTD) of the largest subunit of RNA polymerase II by the kinase module CAK controls the initiation of transcription. XPD/ERCC2 acts by forming a bridge between CAK and the core-TFIIH complex. Involved in the regulation of vitamin-D receptor activity. As part of the mitotic spindle-associated MMXD complex it plays a role in chromosome segregation. Might have a role in aging process and could play a causative role in the generation of skin cancers. The chain is General transcription and DNA repair factor IIH helicase subunit XPD (Ercc2) from Mus musculus (Mouse).